The chain runs to 61 residues: Small ribosomal subunit protein uS14 (61 aa).

Zn(2+) contacts are provided by cysteine 24, cysteine 27, cysteine 40, and cysteine 43.

The protein belongs to the universal ribosomal protein uS14 family. Zinc-binding uS14 subfamily. As to quaternary structure, part of the 30S ribosomal subunit. Contacts proteins S3 and S10. Zn(2+) is required as a cofactor.

Binds 16S rRNA, required for the assembly of 30S particles and may also be responsible for determining the conformation of the 16S rRNA at the A site. The polypeptide is Small ribosomal subunit protein uS14 (Sulfurovum sp. (strain NBC37-1)).